The following is a 219-amino-acid chain: Large ribosomal subunit protein uL3 (219 aa).

A compositionally biased stretch (polar residues) spans 133-145 (GRASHGNSRSHNV). Residues 133 to 153 (GRASHGNSRSHNVPGSIGMAQ) are disordered. Gln-153 is subject to N5-methylglutamine.

Belongs to the universal ribosomal protein uL3 family. In terms of assembly, part of the 50S ribosomal subunit. Forms a cluster with proteins L14 and L19. In terms of processing, methylated by PrmB.

Functionally, one of the primary rRNA binding proteins, it binds directly near the 3'-end of the 23S rRNA, where it nucleates assembly of the 50S subunit. The chain is Large ribosomal subunit protein uL3 from Paraburkholderia phymatum (strain DSM 17167 / CIP 108236 / LMG 21445 / STM815) (Burkholderia phymatum).